Consider the following 222-residue polypeptide: 7-cyano-7-deazaguanine synthase (222 aa).

Residue 7–17 (LSGGMDSAVAT) participates in ATP binding. Cys188, Cys196, Cys199, and Cys202 together coordinate Zn(2+).

It belongs to the QueC family. It depends on Zn(2+) as a cofactor.

The enzyme catalyses 7-carboxy-7-deazaguanine + NH4(+) + ATP = 7-cyano-7-deazaguanine + ADP + phosphate + H2O + H(+). Its pathway is purine metabolism; 7-cyano-7-deazaguanine biosynthesis. In terms of biological role, catalyzes the ATP-dependent conversion of 7-carboxy-7-deazaguanine (CDG) to 7-cyano-7-deazaguanine (preQ(0)). In Methanothermobacter thermautotrophicus (strain ATCC 29096 / DSM 1053 / JCM 10044 / NBRC 100330 / Delta H) (Methanobacterium thermoautotrophicum), this protein is 7-cyano-7-deazaguanine synthase.